We begin with the raw amino-acid sequence, 239 residues long: Small ribosomal subunit protein uS3 (239 aa).

In terms of domain architecture, KH type-2 spans Arg-40–Asn-108. Positions Lys-212–Glu-239 are disordered. Positions Ala-215 to Pro-226 are enriched in basic and acidic residues. A compositionally biased stretch (basic residues) spans Arg-227–Glu-239.

It belongs to the universal ribosomal protein uS3 family. In terms of assembly, part of the 30S ribosomal subunit. Forms a tight complex with proteins S10 and S14.

Its function is as follows. Binds the lower part of the 30S subunit head. Binds mRNA in the 70S ribosome, positioning it for translation. This Thermus thermophilus (strain ATCC BAA-163 / DSM 7039 / HB27) protein is Small ribosomal subunit protein uS3 (rpsC).